The chain runs to 147 residues: Transthyretin (147 aa).

Positions Met1 to Ala20 are cleaved as a signal peptide. Sulfocysteine is present on Cys30. Lys35 contacts L-thyroxine. Position 62 is a 4-carboxyglutamate (Glu62). Ser72 carries the post-translational modification Phosphoserine. Glu74 provides a ligand contact to L-thyroxine. The N-linked (GlcNAc...) asparagine glycan is linked to Asn118. Ser137 contacts L-thyroxine.

This sequence belongs to the transthyretin family. Homotetramer. Dimer of dimers. In the homotetramer, subunits assemble around a central channel that can accommodate two ligand molecules. Interacts with RBP4. Post-translationally, sulfonation of the reactive cysteine Cys-30 enhances the stability of the native conformation of TTR, avoiding misassembly of the protein leading to amyloid formation. In terms of tissue distribution, detected in serum and cerebrospinal fluid (at protein level). Highly expressed in the choroid plexus. Detected at lower levels in the liver.

It localises to the secreted. In terms of biological role, thyroid hormone-binding protein. Probably transports thyroxine from the bloodstream to the brain. The protein is Transthyretin (Ttr) of Rattus norvegicus (Rat).